Here is an 879-residue protein sequence, read N- to C-terminus: Fanconi anemia core complex-associated protein 100 (879 aa).

In terms of assembly, belongs to the multisubunit FA complex composed of FANCA, FANCB, FANCC, FANCE, FANCF, FANCG, FANCL/PHF9, FANCM, FAAP24 and FAAP100. Forms a subcomplex with FANCB and FANCL.

The protein resides in the nucleus. In terms of biological role, plays a role in Fanconi anemia-associated DNA damage response network. Regulates FANCD2 monoubiquitination and the stability of the FA core complex. Induces chromosomal instability as well as hypersensitivity to DNA cross-linking agents, when repressed. The protein is Fanconi anemia core complex-associated protein 100 of Mus musculus (Mouse).